The sequence spans 954 residues: Endogenous retrovirus group K member 25 Pol protein (954 aa).

The region spanning 57–245 is the Reverse transcriptase domain; that stretch reads LEKGHIEPSF…TPFHYLGMQI (189 aa). Positions 161–164 match the LPQG motif; the sequence is LPQG. Positions 195-198 match the YXDD motif; that stretch reads YIDD. The RNase H type-1 domain maps to 460–588; that stretch reads LENALTVFTD…ADLLVSSALI (129 aa). D469, E497, D515, and D580 together coordinate Mg(2+). The Integrase-type zinc-finger motif lies at 585-626; sequence SALIKAQELHALTHVNAAGLKNKFDVTWKLAKDIVQHCTQCQ. Zn(2+)-binding residues include H594, H598, C622, and C625. One can recognise an Integrase catalytic domain in the interval 640–801; sequence RGLCPNALWQ…TSAEQHLTGK (162 aa). The segment at residues 809-857 is a DNA-binding region (integrase-type); that stretch reads KLIWWKDNKNKTWEIGKVITWGRGFACVSPGENQLPVWIPTRHLKFYNE. Residues 862–888 form a disordered region; the sequence is AKKSTSAETETPQSSTVDSQDEQNGDV. Over residues 867–879 the composition is skewed to polar residues; it reads SAETETPQSSTVD.

It belongs to the beta type-B retroviral polymerase family. HERV class-II K(HML-2) pol subfamily.

The catalysed reaction is DNA(n) + a 2'-deoxyribonucleoside 5'-triphosphate = DNA(n+1) + diphosphate. It carries out the reaction Endonucleolytic cleavage to 5'-phosphomonoester.. Early post-infection, the reverse transcriptase converts the viral RNA genome into double-stranded viral DNA. The RNase H domain of the reverse transcriptase performs two functions. It degrades the RNA template and specifically removes the RNA primer from the RNA/DNA hybrid. Following nuclear import, the integrase catalyzes the insertion of the linear, double-stranded viral DNA into the host cell chromosome. Endogenous Pol proteins may have kept, lost or modified their original function during evolution. The polypeptide is Endogenous retrovirus group K member 25 Pol protein (ERVK-25) (Homo sapiens (Human)).